The primary structure comprises 103 residues: Histone H4 (103 aa).

Residues 1 to 14 (MSGRGKGGKGLGKG) show a composition bias toward gly residues. Residues 1–20 (MSGRGKGGKGLGKGGAKRHR) are disordered. An N6-acetyl-N6-methyllysine; alternate modification is found at lysine 6. An N6-methyllysine; alternate mark is found at lysine 6, lysine 9, and lysine 13. Lysine 13 bears the N6-acetyl-N6-methyllysine; alternate mark. A DNA-binding region spans residues 17 to 21 (KRHRK). An N6-glutaryllysine modification is found at lysine 92.

It belongs to the histone H4 family. The nucleosome is a histone octamer containing two molecules each of H2A, H2B, H3 and H4 assembled in one H3-H4 heterotetramer and two H2A-H2B heterodimers. The octamer wraps approximately 147 bp of DNA. Glutarylation at Lys-92 (H4K91glu) destabilizes nucleosomes by promoting dissociation of the H2A-H2B dimers from nucleosomes.

It is found in the nucleus. The protein localises to the chromosome. Core component of nucleosome. Nucleosomes wrap and compact DNA into chromatin, limiting DNA accessibility to the cellular machineries which require DNA as a template. Histones thereby play a central role in transcription regulation, DNA repair, DNA replication and chromosomal stability. DNA accessibility is regulated via a complex set of post-translational modifications of histones, also called histone code, and nucleosome remodeling. This is Histone H4 (HHF1) from Mycosarcoma maydis (Corn smut fungus).